A 212-amino-acid chain; its full sequence is Large ribosomal subunit protein uL3 (212 aa).

The disordered stretch occupies residues 119 to 146; sequence YQGNIKRWGQSRGPETHGSRYHRIPGSM.

It belongs to the universal ribosomal protein uL3 family. Part of the 50S ribosomal subunit. Forms a cluster with proteins L14 and L19.

One of the primary rRNA binding proteins, it binds directly near the 3'-end of the 23S rRNA, where it nucleates assembly of the 50S subunit. The polypeptide is Large ribosomal subunit protein uL3 (Lactobacillus helveticus (strain DPC 4571)).